We begin with the raw amino-acid sequence, 900 residues long: Probable beta-mannosidase (900 aa).

The N-terminal stretch at 1-21 (MRTSLVVCLFWLLFQLHTTHG) is a signal peptide. N-linked (GlcNAc...) asparagine glycosylation is found at N38, N42, and N131. The active-site Proton donor is the E463. Residues N477, N576, N661, and N738 are each glycosylated (N-linked (GlcNAc...) asparagine).

Belongs to the glycosyl hydrolase 2 family.

The protein resides in the lysosome. It catalyses the reaction Hydrolysis of terminal, non-reducing beta-D-mannose residues in beta-D-mannosides.. The sequence is that of Probable beta-mannosidase from Caenorhabditis elegans.